We begin with the raw amino-acid sequence, 246 residues long: MYILNKFIRRTVIFFFFCYLPIASSESKKIEQPLLTQKYYGLRLGTTRVIYKEDAPSTSFWIMNEKEYPILVQTQVYNDDKSSKAPFIVTPPILKVESNARTRLKVIPTSNLFNKNEESLYWLCVKGVPPLNDNESNNKNNITTNLNVNVVTNSCIKLIYRPKTIDLTTMEIADKLKLERKGNSIVIKNPTSSYVNIANIKSGNLSFNIPNGYIEPFGYAQLPGGVHSKITLTILDDNGAEIIRDY.

An N-terminal signal peptide occupies residues 1–24; that stretch reads MYILNKFIRRTVIFFFFCYLPIAS. An intrachain disulfide couples Cys124 to Cys155.

This sequence belongs to the periplasmic pilus chaperone family.

It is found in the periplasm. Required for the biogenesis of the SefA (SEF14) fimbria. This is Chaperone protein SefB (sefB) from Salmonella enteritidis.